The following is an 84-amino-acid chain: Sec-independent protein translocase protein TatA (84 aa).

A helical membrane pass occupies residues 1 to 21 (MGGLQPWHWLIVIAVFVLLFG). Positions 46 to 84 (MQSDSNAAKSDQPEQITSERVVVDPSTQSTSSNSDKRPA) are disordered. The span at 48 to 63 (SDSNAAKSDQPEQITS) shows a compositional bias: polar residues.

This sequence belongs to the TatA/E family. In terms of assembly, the Tat system comprises two distinct complexes: a TatABC complex, containing multiple copies of TatA, TatB and TatC subunits, and a separate TatA complex, containing only TatA subunits. Substrates initially bind to the TatABC complex, which probably triggers association of the separate TatA complex to form the active translocon.

The protein resides in the cell membrane. Functionally, part of the twin-arginine translocation (Tat) system that transports large folded proteins containing a characteristic twin-arginine motif in their signal peptide across membranes. TatA could form the protein-conducting channel of the Tat system. The chain is Sec-independent protein translocase protein TatA from Mycolicibacterium gilvum (strain PYR-GCK) (Mycobacterium gilvum (strain PYR-GCK)).